The chain runs to 304 residues: UDP-3-O-acyl-N-acetylglucosamine deacetylase (304 aa).

Zn(2+) is bound by residues histidine 79, histidine 238, and aspartate 242. Histidine 265 serves as the catalytic Proton donor.

This sequence belongs to the LpxC family. It depends on Zn(2+) as a cofactor.

The catalysed reaction is a UDP-3-O-[(3R)-3-hydroxyacyl]-N-acetyl-alpha-D-glucosamine + H2O = a UDP-3-O-[(3R)-3-hydroxyacyl]-alpha-D-glucosamine + acetate. It participates in glycolipid biosynthesis; lipid IV(A) biosynthesis; lipid IV(A) from (3R)-3-hydroxytetradecanoyl-[acyl-carrier-protein] and UDP-N-acetyl-alpha-D-glucosamine: step 2/6. In terms of biological role, catalyzes the hydrolysis of UDP-3-O-myristoyl-N-acetylglucosamine to form UDP-3-O-myristoylglucosamine and acetate, the committed step in lipid A biosynthesis. The protein is UDP-3-O-acyl-N-acetylglucosamine deacetylase of Photobacterium profundum (strain SS9).